A 96-amino-acid chain; its full sequence is Protein RnfH (96 aa).

The protein belongs to the UPF0125 (RnfH) family.

The chain is Protein RnfH from Escherichia coli O139:H28 (strain E24377A / ETEC).